Consider the following 165-residue polypeptide: Small ribosomal subunit protein uS3m (165 aa).

Residues 1–30 constitute a mitochondrion transit peptide; it reads MNFLKKLLPQVATEVQQLSRSGFHTSSVCC.

The protein belongs to the universal ribosomal protein uS3 family. As to quaternary structure, component of the mitochondrial ribosome small subunit (28S) which comprises a 12S rRNA and about 30 distinct proteins.

It localises to the mitochondrion. This is Small ribosomal subunit protein uS3m (mRpS24) from Drosophila melanogaster (Fruit fly).